Here is a 486-residue protein sequence, read N- to C-terminus: Glutamyl-tRNA(Gln) amidotransferase subunit A (486 aa).

Residues Lys-76 and Ser-151 each act as charge relay system in the active site. Residue Ser-175 is the Acyl-ester intermediate of the active site.

This sequence belongs to the amidase family. GatA subfamily. Heterotrimer of A, B and C subunits.

The catalysed reaction is L-glutamyl-tRNA(Gln) + L-glutamine + ATP + H2O = L-glutaminyl-tRNA(Gln) + L-glutamate + ADP + phosphate + H(+). In terms of biological role, allows the formation of correctly charged Gln-tRNA(Gln) through the transamidation of misacylated Glu-tRNA(Gln) in organisms which lack glutaminyl-tRNA synthetase. The reaction takes place in the presence of glutamine and ATP through an activated gamma-phospho-Glu-tRNA(Gln). The sequence is that of Glutamyl-tRNA(Gln) amidotransferase subunit A from Marinomonas sp. (strain MWYL1).